The following is a 306-amino-acid chain: Aspartate carbamoyltransferase catalytic subunit (306 aa).

Carbamoyl phosphate-binding residues include Arg54 and Thr55. Lys83 lines the L-aspartate pocket. The carbamoyl phosphate site is built by Arg104, His132, and Gln135. Positions 165 and 227 each coordinate L-aspartate. Carbamoyl phosphate contacts are provided by Leu266 and Pro267.

The protein belongs to the aspartate/ornithine carbamoyltransferase superfamily. ATCase family. As to quaternary structure, heterododecamer (2C3:3R2) of six catalytic PyrB chains organized as two trimers (C3), and six regulatory PyrI chains organized as three dimers (R2).

The catalysed reaction is carbamoyl phosphate + L-aspartate = N-carbamoyl-L-aspartate + phosphate + H(+). It functions in the pathway pyrimidine metabolism; UMP biosynthesis via de novo pathway; (S)-dihydroorotate from bicarbonate: step 2/3. Functionally, catalyzes the condensation of carbamoyl phosphate and aspartate to form carbamoyl aspartate and inorganic phosphate, the committed step in the de novo pyrimidine nucleotide biosynthesis pathway. The sequence is that of Aspartate carbamoyltransferase catalytic subunit from Clostridium novyi (strain NT).